The sequence spans 256 residues: Enolase-phosphatase E1 (256 aa).

Mg(2+)-binding residues include D14 and E16. Substrate-binding positions include 142–143 (SS) and K176. Mg(2+) is bound at residue D201.

It belongs to the HAD-like hydrolase superfamily. MasA/MtnC family. Monomer. Mg(2+) serves as cofactor.

The protein localises to the cytoplasm. It is found in the nucleus. It carries out the reaction 5-methylsulfanyl-2,3-dioxopentyl phosphate + H2O = 1,2-dihydroxy-5-(methylsulfanyl)pent-1-en-3-one + phosphate. It participates in amino-acid biosynthesis; L-methionine biosynthesis via salvage pathway; L-methionine from S-methyl-5-thio-alpha-D-ribose 1-phosphate: step 3/6. Its pathway is amino-acid biosynthesis; L-methionine biosynthesis via salvage pathway; L-methionine from S-methyl-5-thio-alpha-D-ribose 1-phosphate: step 4/6. Functionally, bifunctional enzyme that catalyzes the enolization of 2,3-diketo-5-methylthiopentyl-1-phosphate (DK-MTP-1-P) into the intermediate 2-hydroxy-3-keto-5-methylthiopentenyl-1-phosphate (HK-MTPenyl-1-P), which is then dephosphorylated to form the acireductone 1,2-dihydroxy-3-keto-5-methylthiopentene (DHK-MTPene). This is Enolase-phosphatase E1 from Drosophila erecta (Fruit fly).